The chain runs to 299 residues: UDP-N-acetylenolpyruvoylglucosamine reductase (299 aa).

The FAD-binding PCMH-type domain maps to 29–193; it reads RIGGPAEIFL…TAASLRFRKA (165 aa). The active site involves Arg173. Ser222 (proton donor) is an active-site residue. Glu292 is an active-site residue.

Belongs to the MurB family. FAD is required as a cofactor.

The protein resides in the cytoplasm. It carries out the reaction UDP-N-acetyl-alpha-D-muramate + NADP(+) = UDP-N-acetyl-3-O-(1-carboxyvinyl)-alpha-D-glucosamine + NADPH + H(+). It functions in the pathway cell wall biogenesis; peptidoglycan biosynthesis. In terms of biological role, cell wall formation. The chain is UDP-N-acetylenolpyruvoylglucosamine reductase from Syntrophotalea carbinolica (strain DSM 2380 / NBRC 103641 / GraBd1) (Pelobacter carbinolicus).